A 244-amino-acid chain; its full sequence is Phosphatidylserine decarboxylase proenzyme (244 aa).

Ser212 serves as the catalytic Schiff-base intermediate with substrate; via pyruvic acid. The residue at position 212 (Ser212) is a Pyruvic acid (Ser); by autocatalysis.

It belongs to the phosphatidylserine decarboxylase family. PSD-A subfamily. As to quaternary structure, heterodimer of a large membrane-associated beta subunit and a small pyruvoyl-containing alpha subunit. Pyruvate serves as cofactor. Is synthesized initially as an inactive proenzyme. Formation of the active enzyme involves a self-maturation process in which the active site pyruvoyl group is generated from an internal serine residue via an autocatalytic post-translational modification. Two non-identical subunits are generated from the proenzyme in this reaction, and the pyruvate is formed at the N-terminus of the alpha chain, which is derived from the carboxyl end of the proenzyme. The post-translation cleavage follows an unusual pathway, termed non-hydrolytic serinolysis, in which the side chain hydroxyl group of the serine supplies its oxygen atom to form the C-terminus of the beta chain, while the remainder of the serine residue undergoes an oxidative deamination to produce ammonia and the pyruvoyl prosthetic group on the alpha chain.

The protein resides in the cell membrane. The enzyme catalyses a 1,2-diacyl-sn-glycero-3-phospho-L-serine + H(+) = a 1,2-diacyl-sn-glycero-3-phosphoethanolamine + CO2. The protein operates within phospholipid metabolism; phosphatidylethanolamine biosynthesis; phosphatidylethanolamine from CDP-diacylglycerol: step 2/2. In terms of biological role, catalyzes the formation of phosphatidylethanolamine (PtdEtn) from phosphatidylserine (PtdSer). This is Phosphatidylserine decarboxylase proenzyme from Granulibacter bethesdensis (strain ATCC BAA-1260 / CGDNIH1).